Consider the following 179-residue polypeptide: Acireductone dioxygenase (179 aa).

Histidine 97, histidine 99, glutamate 103, and histidine 141 together coordinate Fe(2+). Residues histidine 97, histidine 99, glutamate 103, and histidine 141 each contribute to the Ni(2+) site.

Belongs to the acireductone dioxygenase (ARD) family. As to quaternary structure, monomer. Fe(2+) is required as a cofactor. Requires Ni(2+) as cofactor.

The enzyme catalyses 1,2-dihydroxy-5-(methylsulfanyl)pent-1-en-3-one + O2 = 3-(methylsulfanyl)propanoate + CO + formate + 2 H(+). It carries out the reaction 1,2-dihydroxy-5-(methylsulfanyl)pent-1-en-3-one + O2 = 4-methylsulfanyl-2-oxobutanoate + formate + 2 H(+). It functions in the pathway amino-acid biosynthesis; L-methionine biosynthesis via salvage pathway; L-methionine from S-methyl-5-thio-alpha-D-ribose 1-phosphate: step 5/6. Catalyzes 2 different reactions between oxygen and the acireductone 1,2-dihydroxy-3-keto-5-methylthiopentene (DHK-MTPene) depending upon the metal bound in the active site. Fe-containing acireductone dioxygenase (Fe-ARD) produces formate and 2-keto-4-methylthiobutyrate (KMTB), the alpha-ketoacid precursor of methionine in the methionine recycle pathway. Ni-containing acireductone dioxygenase (Ni-ARD) produces methylthiopropionate, carbon monoxide and formate, and does not lie on the methionine recycle pathway. The polypeptide is Acireductone dioxygenase (Granulibacter bethesdensis (strain ATCC BAA-1260 / CGDNIH1)).